The sequence spans 309 residues: Porphobilinogen deaminase (309 aa).

Cys244 is subject to S-(dipyrrolylmethanemethyl)cysteine.

The protein belongs to the HMBS family. As to quaternary structure, monomer. Dipyrromethane is required as a cofactor.

It carries out the reaction 4 porphobilinogen + H2O = hydroxymethylbilane + 4 NH4(+). It participates in porphyrin-containing compound metabolism; protoporphyrin-IX biosynthesis; coproporphyrinogen-III from 5-aminolevulinate: step 2/4. Its function is as follows. Tetrapolymerization of the monopyrrole PBG into the hydroxymethylbilane pre-uroporphyrinogen in several discrete steps. The chain is Porphobilinogen deaminase from Listeria monocytogenes serovar 1/2a (strain ATCC BAA-679 / EGD-e).